Reading from the N-terminus, the 253-residue chain is Aspartic acid-rich protein (253 aa).

A signal peptide spans 1 to 22; the sequence is MYLFIYIFFFFFFFFFFVIVQK. Positions 211-253 are disordered; it reads DDFDEEFDDDDDDDDDDDDDDDDDDKDDDLDGDDDGNNDDNDD.

It belongs to the nucleosome assembly protein (NAP) family.

This Plasmodium falciparum (isolate fcm17 / Senegal) protein is Aspartic acid-rich protein.